Reading from the N-terminus, the 1816-residue chain is MSGASVKVAVRVRPFNSRETSKESKCIIQMQGNSTSIINPKNPKEAPKSFSFDYSYWSHTSPEDPCFASQSRVYNDIGKEMLLHAFEGYNVCIFAYGQTGAGKSYTMMGKQEESQAGIIPQLCEELFEKINDNCNEDMSYSVEVSYMEIYCERVRDLLNPKNKGNLRVREHPLLGPYVEDLSKLAVTSYTDIADLMDAGNKARTVAATNMNETSSRSHAVFTIVFTQKKQDPETNLSTEKVSKISLVDLAGSERADSTGAKGTRLKEGANINKSLTTLGKVISALAEVDNCTSKSKKKKKTDFIPYRDSVLTWLLRENLGGNSRTAMVAALSPADINYDETLSTLRYADRAKQIKCNAVINEDPNAKLVRELKEEVTRLKDLLRAQGLGDIIDIDPLMDDYSGSGGKYLKDFQNNKHRYLLASENQRPGNFSTASMGSLTSSPSSCSLNSQAGLTSVTSIQERIMSTPGGEEAIERLKESEKIIAELNETWEEKLRKTEAIRMEREALLAEMGVAIREDGGTLGVFSPKKTPHLVNLNEDPLMSECLLYYIKDGITRVGQADAERRQDIVLSGAHIKEEHCIFRSERNNTGEVIVTLEPCERSETYVNGKRVAHPVQLRSGNRIIMGKNHVFRFNHPEQARAEREKTPSAETPSEPVDWTFAQRELLEKQGIDMKQEMEKRLQEMEILYKREKEEADLLLEQQRLDYESKLQALQKQVETRSLAAETTEEEEEEEEVPWTQHEFELAQWAFRKWKSHQFTSLRDLLWGNAVYLKEANAISVELKKKVQFQFVLLTDTLYSPVPPELLPTEMGKTHEDRPFPRTVVAVEVQDLKNGATHYWSLDKLKQRLDLMREMYDRAGEVGSNAQDDSETTMTGSDPFYDRFHWFKLVGSSPIFHGCVNERLADRTPSPTFSTADSDITELADEQQDAMEDFDDEAFVDDTGSDAGTEEGSELFSDGHDPFYDRSPWFILVGRAFVYLSNLLYPVPLIHRVAIVSEKGEVRGFLRVAVQAIAADEEAPDYGSGIRQSGTAKISFDNEYFNQSDFPSAAMTRSGLSLEELRIVEGQGQSSEVISPPEEVNRMNDLDLKSGTLLDGKMVMEGFSEEIGNHLKLGSAFTFRVTVLQASGILPEYADIFCQFNFLHRHDEAFSTEPLKNNGRGSPLGFYHVQNIAVEVTESFVDYIKTKPIVFEVFGHYQQHPLHLQGQELNSPPQPSRRFFPPPMPLSRPVPATKLNTMNKTSLGQSMSKYDLLVWFEISELEPTGEYIPAVVDHTAGLPCQGTFLLHQGIQRRITVTIIHEKGSELHWKDVRELVVGRIRNKPEVDEAAVDAILSLNIISAKSLKSSHSSSRTFYRFEAVWDSSLHNSLLLNRVTPYGEKIYMTLSAYLELDHCIQPAVITKDVCMVFYSRDAKISPPRSLRNLFGSGYSKSPDSNRVTGIYELSLCKMADTGSPGMQRRRRKVLDTSVAYVRGEENLAGWRPRGDSLILEHQWELEKLELLHEVEKTRHFLLLRERLGDSIPKSMSDSLSPSLSSGTLSTSTSISSQISTTTFESAITPSESSGYDSADIESLVDREKELATKCLQLLTHTFNREFSQVHGSISDCKLSDISPIGRDPSVSSFSSSTLTPSSTCPSLVDSRSSSMDQKTPEANSRASSPCQEFEQFQIIPTVETPYLARAGKNEFLNLVPDIEEVRAGSVVSKKGYLHFKEPLSSNWAKHFVVVRRPYVFIYNSDKDPVERGIINLSTAQVEYSEDQQAMLKTPNTFAVCTKHRGVLLQALNDKDMNDWLYAFNPLLAGTIRSKLSRRCPSQPKY.

S2 is subject to N-acetylserine. Residues 5 to 354 (SVKVAVRVRP…LRYADRAKQI (350 aa)) form the Kinesin motor domain. 97–104 (GQTGAGKS) lines the ATP pocket. The interaction with KIFBP stretch occupies residues 270 to 350 (NINKSLTTLG…TLSTLRYADR (81 aa)). Residues 431 to 450 (FSTASMGSLTSSPSSCSLNS) form a disordered region. Low complexity predominate over residues 432 to 450 (STASMGSLTSSPSSCSLNS). Residues 470-512 (GEEAIERLKESEKIIAELNETWEEKLRKTEAIRMEREALLAEM) are a coiled coil. Residues 556-612 (TRVGQADAERRQDIVLSGAHIKEEHCIFRSERNNTGEVIVTLEPCERSETYVNGKRV) enclose the FHA domain. Residues T647 and T652 each carry the phosphothreonine modification. Positions 672–731 (IDMKQEMEKRLQEMEILYKREKEEADLLLEQQRLDYESKLQALQKQVETRSLAAETTEEE) form a coiled coil. S1054, S1057, S1416, S1454, and S1487 each carry phosphoserine. Positions 1550–1570 (STTTFESAITPSESSGYDSAD) are disordered. S1573, S1603, S1610, and S1613 each carry phosphoserine. Residues 1620-1637 (SVSSFSSSTLTPSSTCPS) are compositionally biased toward low complexity. The segment at 1620–1659 (SVSSFSSSTLTPSSTCPSLVDSRSSSMDQKTPEANSRASS) is disordered. A compositionally biased stretch (polar residues) spans 1640 to 1659 (DSRSSSMDQKTPEANSRASS). One can recognise a PH domain in the interval 1701–1799 (VVSKKGYLHF…WLYAFNPLLA (99 aa)).

Belongs to the TRAFAC class myosin-kinesin ATPase superfamily. Kinesin family. Unc-104 subfamily. As to quaternary structure, monomer. Interacts with KIFBP; positively regulates KIF1B microtubule motor activity. Interacts (via C-terminus end of the kinesin-motor domain) with CHP1; the interaction occurs in a calcium-dependent manner. Interacts with MADD (via death domain); links this isoform of KIF1B to Rab3-carrying vesicles in anterograde synaptic vesicle transport. In terms of tissue distribution, expressed in the brain with lower expression in testis and liver (at protein level). Strongly expressed in the brain and ovary, with lower expression in lung, kidney, uterus, testis and liver. Isoform 2 is expressed in non-neuronal tissues.

The protein localises to the cytoplasm. Its subcellular location is the cytoskeleton. It localises to the cytoplasmic vesicle. It is found in the secretory vesicle. The protein resides in the synaptic vesicle membrane. The protein localises to the lysosome. The enzyme catalyses ATP + H2O + a kinesin associated with a microtubule at position (n) = ADP + phosphate a kinesin associated with a microtubule at position (n+1, toward the plus end).. In terms of biological role, has a plus-end-directed microtubule motor activity and functions as a motor for transport of vesicles and organelles along microtubules. Has a plus-end-directed microtubule motor activity and functions as a motor for anterograde synaptic vesicle transport along axonal microtubules from the cell body to the presynapse in neuronal cells. Its function is as follows. Has a plus-end-directed microtubule motor activity and functions as a motor for the translocation of lysosomes from perinuclear regions to the cell periphery. In Rattus norvegicus (Rat), this protein is Kinesin-like protein KIF1B.